The primary structure comprises 106 residues: ATP-dependent Clp protease adapter protein ClpS (106 aa).

This sequence belongs to the ClpS family. In terms of assembly, binds to the N-terminal domain of the chaperone ClpA.

Involved in the modulation of the specificity of the ClpAP-mediated ATP-dependent protein degradation. The sequence is that of ATP-dependent Clp protease adapter protein ClpS from Yersinia pestis bv. Antiqua (strain Antiqua).